We begin with the raw amino-acid sequence, 333 residues long: Ornithine carbamoyltransferase (333 aa).

Residues 56–59, Arg-107, and 134–137 contribute to the carbamoyl phosphate site; these read STRT and HPTQ. L-ornithine contacts are provided by residues Asn-167, Asp-231, and 235-236; that span reads SM. Carbamoyl phosphate-binding positions include 273–274 and Arg-318; that span reads CL.

This sequence belongs to the aspartate/ornithine carbamoyltransferase superfamily. OTCase family.

It is found in the cytoplasm. It carries out the reaction carbamoyl phosphate + L-ornithine = L-citrulline + phosphate + H(+). Its pathway is amino-acid degradation; L-arginine degradation via ADI pathway; carbamoyl phosphate from L-arginine: step 2/2. Reversibly catalyzes the transfer of the carbamoyl group from carbamoyl phosphate (CP) to the N(epsilon) atom of ornithine (ORN) to produce L-citrulline. This Clostridium botulinum (strain Kyoto / Type A2) protein is Ornithine carbamoyltransferase.